A 315-amino-acid polypeptide reads, in one-letter code: MSKPLRIVFAGTPDFAAQHLAALLSSEHEVIAVYTQPDRPAGRGKKLTASPVKTIALEHNIPVYQPENFKSDEAKQALADLNADIMVVVAYGLLLPQAVLDTPKLGCINVHGSILPRWRGAAPIQRSIWAGDAETGVTIMQMDIGLDTGDMLKIATLPIDASDTSATMYDKLAKLGPVVLVECLADIAAGTAIAIKQDDERANYAKKLSKEEARINWQDDAEHIERCVRAFNPWPMSHFEVAENSIKVWQSRVEASSHDAPAGTILKADKSGIYVATGHGCLVLEQIQIPGKKAMPVQDVLNARAAWFEVGSVLS.

113-116 serves as a coordination point for (6S)-5,6,7,8-tetrahydrofolate; sequence SILP.

Belongs to the Fmt family.

The catalysed reaction is L-methionyl-tRNA(fMet) + (6R)-10-formyltetrahydrofolate = N-formyl-L-methionyl-tRNA(fMet) + (6S)-5,6,7,8-tetrahydrofolate + H(+). Its function is as follows. Attaches a formyl group to the free amino group of methionyl-tRNA(fMet). The formyl group appears to play a dual role in the initiator identity of N-formylmethionyl-tRNA by promoting its recognition by IF2 and preventing the misappropriation of this tRNA by the elongation apparatus. This Vibrio vulnificus (strain CMCP6) protein is Methionyl-tRNA formyltransferase.